A 480-amino-acid polypeptide reads, in one-letter code: NADH-quinone oxidoreductase subunit N (480 aa).

A run of 14 helical transmembrane segments spans residues 12–32 (LLIPELVLAGGAMALLMLGVF), 41–61 (LVQWLTVGLLAAAALAALFLV), 80–100 (FSKTAIGLVAAIAMLLAMPYL), 105–125 (LGKIEYPVLVVLAVTGMMMMV), 130–150 (LIAMYMGIELQSLALYVLAAF), 165–185 (FVLGALSSGLLLYGASLVYGF), 204–224 (IGLTVGLVFVICGLAFKVSAA), 237–257 (APTPVTAFFATAPKFAAIVLL), 275–295 (VIWMIAVLSMAVGAFGALTQQ), 300–320 (LMAYSSISNMGYALVAVAAAS), 326–346 (ALLVFMVLYMVGAIGSFATIL), 372–392 (GWSMTALMFSIGGLPFMVGFF), 406–428 (LMILAVLAVLFSVVGAAYYLRIV), and 450–470 (IARIAGLATVLLLPVLGWLVF).

This sequence belongs to the complex I subunit 2 family. As to quaternary structure, NDH-1 is composed of 14 different subunits. Subunits NuoA, H, J, K, L, M, N constitute the membrane sector of the complex.

It localises to the cell inner membrane. The enzyme catalyses a quinone + NADH + 5 H(+)(in) = a quinol + NAD(+) + 4 H(+)(out). Functionally, NDH-1 shuttles electrons from NADH, via FMN and iron-sulfur (Fe-S) centers, to quinones in the respiratory chain. The immediate electron acceptor for the enzyme in this species is believed to be ubiquinone. Couples the redox reaction to proton translocation (for every two electrons transferred, four hydrogen ions are translocated across the cytoplasmic membrane), and thus conserves the redox energy in a proton gradient. The chain is NADH-quinone oxidoreductase subunit N from Maricaulis maris (strain MCS10) (Caulobacter maris).